Here is a 283-residue protein sequence, read N- to C-terminus: ATP phosphoribosyltransferase (283 aa).

Belongs to the ATP phosphoribosyltransferase family. Long subfamily. It depends on Mg(2+) as a cofactor.

Its subcellular location is the cytoplasm. The catalysed reaction is 1-(5-phospho-beta-D-ribosyl)-ATP + diphosphate = 5-phospho-alpha-D-ribose 1-diphosphate + ATP. It participates in amino-acid biosynthesis; L-histidine biosynthesis; L-histidine from 5-phospho-alpha-D-ribose 1-diphosphate: step 1/9. With respect to regulation, feedback inhibited by histidine. In terms of biological role, catalyzes the condensation of ATP and 5-phosphoribose 1-diphosphate to form N'-(5'-phosphoribosyl)-ATP (PR-ATP). Has a crucial role in the pathway because the rate of histidine biosynthesis seems to be controlled primarily by regulation of HisG enzymatic activity. This Nocardia farcinica (strain IFM 10152) protein is ATP phosphoribosyltransferase.